Reading from the N-terminus, the 194-residue chain is Oligoribonuclease (194 aa).

One can recognise an Exonuclease domain in the interval 11–174 (LIWIDLEMTG…SDVRDSINEL (164 aa)). Tyr-132 is an active-site residue.

The protein belongs to the oligoribonuclease family.

The protein resides in the cytoplasm. Its function is as follows. 3'-to-5' exoribonuclease specific for small oligoribonucleotides. This Xanthomonas oryzae pv. oryzae (strain MAFF 311018) protein is Oligoribonuclease.